The sequence spans 76 residues: Sec-independent protein translocase protein TatA (76 aa).

A helical membrane pass occupies residues 1-21; that stretch reads MGSFSIWHWLIVLVIVMLVFG. Composition is skewed to basic and acidic residues over residues 41-50 and 57-76; these read DGMKDGEDKG and KELRDSTTIDVDAKEKSRQQ. Positions 41–76 are disordered; that stretch reads DGMKDGEDKGAQPAASKELRDSTTIDVDAKEKSRQQ.

This sequence belongs to the TatA/E family. As to quaternary structure, the Tat system comprises two distinct complexes: a TatABC complex, containing multiple copies of TatA, TatB and TatC subunits, and a separate TatA complex, containing only TatA subunits. Substrates initially bind to the TatABC complex, which probably triggers association of the separate TatA complex to form the active translocon.

The protein localises to the cell inner membrane. Functionally, part of the twin-arginine translocation (Tat) system that transports large folded proteins containing a characteristic twin-arginine motif in their signal peptide across membranes. TatA could form the protein-conducting channel of the Tat system. The protein is Sec-independent protein translocase protein TatA of Cupriavidus taiwanensis (strain DSM 17343 / BCRC 17206 / CCUG 44338 / CIP 107171 / LMG 19424 / R1) (Ralstonia taiwanensis (strain LMG 19424)).